A 908-amino-acid chain; its full sequence is Metabotropic glutamate receptor 8 (908 aa).

The N-terminal stretch at methionine 1–serine 33 is a signal peptide. The Extracellular segment spans residues glutamine 34–tryptophan 583. An intrachain disulfide couples cysteine 64 to cysteine 106. N-linked (GlcNAc...) asparagine glycosylation is present at asparagine 95. Residues serine 156, alanine 177–threonine 179, and tyrosine 227 contribute to the L-glutamate site. 7 disulfide bridges follow: cysteine 246/cysteine 534, cysteine 369/cysteine 384, cysteine 424/cysteine 431, cysteine 516/cysteine 535, cysteine 520/cysteine 538, cysteine 541/cysteine 553, and cysteine 556/cysteine 569. Asparagine 298 is a glycosylation site (N-linked (GlcNAc...) asparagine). Residue aspartate 309 coordinates L-glutamate. Position 401 (lysine 401) interacts with L-glutamate. N-linked (GlcNAc...) asparagine glycans are attached at residues asparagine 452 and asparagine 480. Asparagine 565 carries N-linked (GlcNAc...) asparagine glycosylation. Residues alanine 584 to tyrosine 608 traverse the membrane as a helical segment. Residues asparagine 609–glutamate 620 are Cytoplasmic-facing. A helical membrane pass occupies residues leucine 621 to alanine 641. The Extracellular portion of the chain corresponds to alanine 642–isoleucine 647. Residues cysteine 648 to threonine 668 form a helical membrane-spanning segment. The Cytoplasmic segment spans residues lysine 669–glutamine 695. A helical membrane pass occupies residues leucine 696–valine 716. At aspartate 717 to aspartate 746 the chain is on the extracellular side. The chain crosses the membrane as a helical span at residues leucine 747–isoleucine 768. Residues lysine 769–lysine 781 lie on the Cytoplasmic side of the membrane. The helical transmembrane segment at proline 782–glycine 803 threads the bilayer. The Extracellular segment spans residues threonine 804 to leucine 818. A helical membrane pass occupies residues threonine 819–phenylalanine 843. The Cytoplasmic segment spans residues histidine 844–isoleucine 908. A Glycyl lysine isopeptide (Lys-Gly) (interchain with G-Cter in SUMO1) cross-link involves residue lysine 882.

It belongs to the G-protein coupled receptor 3 family. As to quaternary structure, interacts with PICK1.

It localises to the cell membrane. Functionally, G-protein coupled receptor for glutamate. Ligand binding causes a conformation change that triggers signaling via guanine nucleotide-binding proteins (G proteins) and modulates the activity of down-stream effectors, such as adenylate cyclase. Signaling inhibits adenylate cyclase activity. This is Metabotropic glutamate receptor 8 (GRM8) from Homo sapiens (Human).